Here is a 184-residue protein sequence, read N- to C-terminus: Photosystem I assembly protein Ycf4 (184 aa).

The next 2 helical transmembrane spans lie at 22-42 (FCWAFILFLGSLGFLLVGTSS) and 57-77 (IIFFPQGIVMSFYGIAGLFIS).

Belongs to the Ycf4 family.

The protein resides in the plastid. Its subcellular location is the chloroplast thylakoid membrane. Its function is as follows. Seems to be required for the assembly of the photosystem I complex. The polypeptide is Photosystem I assembly protein Ycf4 (Platanus occidentalis (Sycamore)).